Reading from the N-terminus, the 177-residue chain is Large ribosomal subunit protein uL6 (177 aa).

It belongs to the universal ribosomal protein uL6 family. As to quaternary structure, part of the 50S ribosomal subunit.

In terms of biological role, this protein binds to the 23S rRNA, and is important in its secondary structure. It is located near the subunit interface in the base of the L7/L12 stalk, and near the tRNA binding site of the peptidyltransferase center. The polypeptide is Large ribosomal subunit protein uL6 (Rickettsia peacockii (strain Rustic)).